The following is a 337-amino-acid chain: Anthranilate phosphoribosyltransferase (337 aa).

Residues glycine 82, 85-86, threonine 90, 92-95, 110-118, and serine 122 each bind 5-phospho-alpha-D-ribose 1-diphosphate; these read GD, NIST, and KHGGRSVSS. Anthranilate is bound at residue glycine 82. Serine 94 contributes to the Mg(2+) binding site. An anthranilate-binding site is contributed by arginine 168. Mg(2+) is bound by residues aspartate 226 and glutamate 227.

Belongs to the anthranilate phosphoribosyltransferase family. As to quaternary structure, homodimer. Mg(2+) is required as a cofactor.

It carries out the reaction N-(5-phospho-beta-D-ribosyl)anthranilate + diphosphate = 5-phospho-alpha-D-ribose 1-diphosphate + anthranilate. It functions in the pathway amino-acid biosynthesis; L-tryptophan biosynthesis; L-tryptophan from chorismate: step 2/5. Its function is as follows. Catalyzes the transfer of the phosphoribosyl group of 5-phosphorylribose-1-pyrophosphate (PRPP) to anthranilate to yield N-(5'-phosphoribosyl)-anthranilate (PRA). In Francisella tularensis subsp. holarctica (strain OSU18), this protein is Anthranilate phosphoribosyltransferase.